The sequence spans 352 residues: tRNA pseudouridine synthase D (352 aa).

Residue D78 is the Nucleophile of the active site. Positions 153-299 (GVPNYYGEQR…LDQDRRPLLL (147 aa)) constitute a TRUD domain.

This sequence belongs to the pseudouridine synthase TruD family.

The catalysed reaction is uridine(13) in tRNA = pseudouridine(13) in tRNA. Responsible for synthesis of pseudouridine from uracil-13 in transfer RNAs. This chain is tRNA pseudouridine synthase D, found in Aeromonas salmonicida (strain A449).